Reading from the N-terminus, the 1136-residue chain is Probable RNA-dependent RNA polymerase 2 (1136 aa).

Positions 965-989 are disordered; that stretch reads SGDSGALSSSSAQPSPTYDPDLEVP. Positions 967 to 980 are enriched in low complexity; sequence DSGALSSSSAQPSP.

The protein belongs to the RdRP family.

The catalysed reaction is RNA(n) + a ribonucleoside 5'-triphosphate = RNA(n+1) + diphosphate. Its function is as follows. Probably involved in the RNA silencing pathway and required for the generation of small interfering RNAs (siRNAs). The polypeptide is Probable RNA-dependent RNA polymerase 2 (RDR2) (Oryza sativa subsp. japonica (Rice)).